The sequence spans 129 residues: Follitropin subunit beta (129 aa).

Residues 1 to 18 (MKTVQFCFLFCCWKAICC) form the signal peptide. 6 disulfide bridges follow: Cys-21–Cys-69, Cys-35–Cys-84, Cys-38–Cys-122, Cys-46–Cys-100, Cys-50–Cys-102, and Cys-105–Cys-112. N-linked (GlcNAc...) asparagine glycans are attached at residues Asn-25 and Asn-42.

The protein belongs to the glycoprotein hormones subunit beta family. Heterodimer. The active follitropin is a heterodimer composed of an alpha chain/CGA shared with other hormones and a unique beta chain/FSHB shown here.

The protein resides in the secreted. In terms of biological role, together with the alpha chain CGA constitutes follitropin, the follicle-stimulating hormone, and provides its biological specificity to the hormone heterodimer. Binds FSHR, a G protein-coupled receptor, on target cells to activate downstream signaling pathways. Follitropin is involved in follicle development and spermatogenesis in reproductive organs. This Macaca fascicularis (Crab-eating macaque) protein is Follitropin subunit beta (FSHB).